The sequence spans 80 residues: Large ribosomal subunit protein bL31B (80 aa).

This sequence belongs to the bacterial ribosomal protein bL31 family. Type B subfamily. Part of the 50S ribosomal subunit.

This Streptococcus thermophilus (strain CNRZ 1066) protein is Large ribosomal subunit protein bL31B.